Reading from the N-terminus, the 482-residue chain is tRNA sulfurtransferase (482 aa).

A THUMP domain is found at 61–165; sequence PVIADALTRI…NDKLMLVKAR (105 aa). Residues 183 to 184, lysine 265, glycine 287, and glutamine 296 contribute to the ATP site; that span reads LI. Cysteine 344 and cysteine 456 are disulfide-bonded. One can recognise a Rhodanese domain in the interval 404–482; the sequence is FDADQVILDI…GFTNVKVYRP (79 aa). Cysteine 456 (cysteine persulfide intermediate) is an active-site residue.

It belongs to the ThiI family.

Its subcellular location is the cytoplasm. It carries out the reaction [ThiI sulfur-carrier protein]-S-sulfanyl-L-cysteine + a uridine in tRNA + 2 reduced [2Fe-2S]-[ferredoxin] + ATP + H(+) = [ThiI sulfur-carrier protein]-L-cysteine + a 4-thiouridine in tRNA + 2 oxidized [2Fe-2S]-[ferredoxin] + AMP + diphosphate. It catalyses the reaction [ThiS sulfur-carrier protein]-C-terminal Gly-Gly-AMP + S-sulfanyl-L-cysteinyl-[cysteine desulfurase] + AH2 = [ThiS sulfur-carrier protein]-C-terminal-Gly-aminoethanethioate + L-cysteinyl-[cysteine desulfurase] + A + AMP + 2 H(+). Its pathway is cofactor biosynthesis; thiamine diphosphate biosynthesis. Functionally, catalyzes the ATP-dependent transfer of a sulfur to tRNA to produce 4-thiouridine in position 8 of tRNAs, which functions as a near-UV photosensor. Also catalyzes the transfer of sulfur to the sulfur carrier protein ThiS, forming ThiS-thiocarboxylate. This is a step in the synthesis of thiazole, in the thiamine biosynthesis pathway. The sulfur is donated as persulfide by IscS. The sequence is that of tRNA sulfurtransferase from Serratia proteamaculans (strain 568).